The primary structure comprises 144 residues: Putative lipoprotein MAH_0816 (144 aa).

The N-terminal stretch at 1 to 24 is a signal peptide; that stretch reads MRWPMQNRTTAVIAVALATTALVA. Residue C25 is the site of N-palmitoyl cysteine attachment. A lipid anchor (S-diacylglycerol cysteine) is attached at C25.

It belongs to the mycobacterial 19 kDa antigen family.

The protein localises to the cell membrane. This Mycobacterium avium subsp. hominissuis (strain TH135) protein is Putative lipoprotein MAH_0816.